Here is a 355-residue protein sequence, read N- to C-terminus: Holliday junction branch migration complex subunit RuvB (355 aa).

Residues 4-190 (TDKLAAERII…FGIVARLEFY (187 aa)) form a large ATPase domain (RuvB-L) region. Residues L29, R30, G71, K74, T75, T76, 137–139 (EDY), R180, Y190, and R227 each bind ATP. T75 provides a ligand contact to Mg(2+). Residues 191-261 (DAEQLSRIVR…VADAALAMLD (71 aa)) are small ATPAse domain (RuvB-S). The tract at residues 264–355 (PVGFDLMDRK…GSMWNTPDGA (92 aa)) is head domain (RuvB-H). Residues R300, R319, and R324 each coordinate DNA.

Belongs to the RuvB family. In terms of assembly, homohexamer. Forms an RuvA(8)-RuvB(12)-Holliday junction (HJ) complex. HJ DNA is sandwiched between 2 RuvA tetramers; dsDNA enters through RuvA and exits via RuvB. An RuvB hexamer assembles on each DNA strand where it exits the tetramer. Each RuvB hexamer is contacted by two RuvA subunits (via domain III) on 2 adjacent RuvB subunits; this complex drives branch migration. In the full resolvosome a probable DNA-RuvA(4)-RuvB(12)-RuvC(2) complex forms which resolves the HJ.

The protein localises to the cytoplasm. The catalysed reaction is ATP + H2O = ADP + phosphate + H(+). In terms of biological role, the RuvA-RuvB-RuvC complex processes Holliday junction (HJ) DNA during genetic recombination and DNA repair, while the RuvA-RuvB complex plays an important role in the rescue of blocked DNA replication forks via replication fork reversal (RFR). RuvA specifically binds to HJ cruciform DNA, conferring on it an open structure. The RuvB hexamer acts as an ATP-dependent pump, pulling dsDNA into and through the RuvAB complex. RuvB forms 2 homohexamers on either side of HJ DNA bound by 1 or 2 RuvA tetramers; 4 subunits per hexamer contact DNA at a time. Coordinated motions by a converter formed by DNA-disengaged RuvB subunits stimulates ATP hydrolysis and nucleotide exchange. Immobilization of the converter enables RuvB to convert the ATP-contained energy into a lever motion, pulling 2 nucleotides of DNA out of the RuvA tetramer per ATP hydrolyzed, thus driving DNA branch migration. The RuvB motors rotate together with the DNA substrate, which together with the progressing nucleotide cycle form the mechanistic basis for DNA recombination by continuous HJ branch migration. Branch migration allows RuvC to scan DNA until it finds its consensus sequence, where it cleaves and resolves cruciform DNA. The sequence is that of Holliday junction branch migration complex subunit RuvB from Burkholderia vietnamiensis (strain G4 / LMG 22486) (Burkholderia cepacia (strain R1808)).